A 237-amino-acid chain; its full sequence is H/ACA ribonucleoprotein complex subunit 1 (237 aa).

2 stretches are compositionally biased toward gly residues: residues 1-59 (MGFG…GGRG) and 172-237 (RGGG…RGRW). Disordered regions lie at residues 1 to 64 (MGFG…FDTG) and 157 to 237 (KPPQ…RGRW). 2 RGG-box regions span residues 4-56 (GKPR…GRGG) and 166-236 (KAFT…GRGR).

The protein belongs to the GAR1 family. In terms of assembly, component of the box H/ACA small nucleolar ribonucleoprotein (H/ACA snoRNP) complex consisting of Nop60B, Gar1, NPH2 and Nop10, and associated with H/ACA-type snoRNAs.

Its subcellular location is the nucleus. It is found in the nucleolus. Component of the box H/ACA small nucleolar ribonucleoprotein (H/ACA snoRNP) complex, which catalyzes pseudouridylation of rRNA. This involves the isomerization of uridine such that the ribose is subsequently attached to C5, instead of the normal N1. Pseudouridine ('psi') residues may serve to stabilize the conformation of rRNAs. Required for ribosome biogenesis. H/ACA snoRNP complex-dependent ribosome biogenesis is important in female germline cell differentiation during oogenesis. In Drosophila melanogaster (Fruit fly), this protein is H/ACA ribonucleoprotein complex subunit 1.